The following is a 437-amino-acid chain: MRNTELIEWFRQSAPYVNMHRHKTFVIMLDGNAIAHPNFINITNDISLLHSLGIKLVIVFGARCQIENLLKQNNISSSYHHNIRVTDSNMLEIIKQAVGGLHYDIFSRLSLRLPHSPVLNVVSSNAILAQPLGVIDGVDYGLSGKIRRINIEAIQQQLAQNAIVVIGPIAPSVTGKMFNLAFEEIATQLAIKLKVDKLIAFCDRQGLLDEQGKVISDIHPREAKQHLKKFIQQGDYHHSAARFLQAAIDVCHAGIKRSHLISYQTDGSLLQELFSRDGVGTQLSEASSECIRLATSFDIAGLLNLIRPLEDQGLLVKRSREQLEMEISQYTIIERDGIVIACAALIHYPAEKMAEMACVAVHPDYRDSARGDILLEAIKRRAYKLNIEKLFVLTTQTIQWFQERGFVQIQPTDLPVEKQRHYNYQRMSKVLMLALDN.

Residues 289-437 form the N-acetyltransferase domain; sequence ECIRLATSFD…SKVLMLALDN (149 aa).

Belongs to the acetyltransferase family. ArgA subfamily.

It is found in the cytoplasm. It carries out the reaction L-glutamate + acetyl-CoA = N-acetyl-L-glutamate + CoA + H(+). Its pathway is amino-acid biosynthesis; L-arginine biosynthesis; N(2)-acetyl-L-ornithine from L-glutamate: step 1/4. This is Amino-acid acetyltransferase from Haemophilus ducreyi (strain 35000HP / ATCC 700724).